A 156-amino-acid polypeptide reads, in one-letter code: Cyanate hydratase (156 aa).

Catalysis depends on residues Arg96, Glu99, and Ser122.

It belongs to the cyanase family.

The catalysed reaction is cyanate + hydrogencarbonate + 3 H(+) = NH4(+) + 2 CO2. Its function is as follows. Catalyzes the reaction of cyanate with bicarbonate to produce ammonia and carbon dioxide. The sequence is that of Cyanate hydratase from Escherichia coli (strain K12 / DH10B).